A 156-amino-acid chain; its full sequence is Iron sulfur cluster assembly protein 2, mitochondrial (156 aa).

The transit peptide at 1 to 26 (MFARLANPAHFKPLTGSHITRAAKRL) directs the protein to the mitochondrion.

It belongs to the NifU family. Component of the core Fe-S cluster (ISC) assembly machinery. Interacts with frataxin. Interacts with the mitochondrial co-chaperones JAC1 and SSQ1. Interacts with NFS1. Interacts with ferredoxin YAH1; interacts with the reduced form. [2Fe-2S] cluster is required as a cofactor.

It localises to the mitochondrion matrix. It participates in cofactor biosynthesis; iron-sulfur cluster biosynthesis. Scaffold protein for the de novo synthesis of iron-sulfur (Fe-S) clusters within mitochondria, which is required for maturation of both mitochondrial and cytoplasmic [2Fe-2S] and [4Fe-4S] proteins. First, a [2Fe-2S] cluster is transiently assembled on the scaffold proteins ISU1 and ISU2. In a second step, the cluster is released from ISU1/ISU2, transferred to glutaredoxin GRX5, followed by the formation of mitochondrial [2Fe-2S] proteins, the synthesis of [4Fe-4S] clusters and their target-specific insertion into the recipient apoproteins. Cluster assembly on ISU1/ISU2 depends on the function of the cysteine desulfurase complex NFS1-ISD11, which serves as the sulfur donor for cluster synthesis, the iron-binding protein frataxin (YFH1) as the putative iron donor, and the electron transfer chain comprised of ferredoxin reductase ARH1 and ferredoxin YAH1, which receive their electrons from NADH. Fe-S cluster release from ISU1/ISU2 is achieved by interaction with the Hsp70 chaperone SSQ1, assisted by the DnaJ-like co-chaperone JAC1 and the nucleotide exchange factor MGE1. ISU1 is the major isoform in yeast, while ISU2 is not detectable in cells grown to stationary phase. Also involved in production of a sulfur precursor required for thiolation of cytoplasmic tRNAs. This Saccharomyces cerevisiae (strain ATCC 204508 / S288c) (Baker's yeast) protein is Iron sulfur cluster assembly protein 2, mitochondrial.